Here is a 569-residue protein sequence, read N- to C-terminus: Membrane protein insertase YidC (569 aa).

Residues 6–26 form a helical membrane-spanning segment; that stretch reads FVLFLIFATSLLFLWDAWQKE. Composition is skewed to polar residues over residues 32-52 and 62-74; these read QGPK…TAGT and LASS…STAE. Residues 32–81 are disordered; it reads QGPKTAVQGTETQANTGTAGTAETPVPGDQLASSVPQRGSTAENGAPVRA. 5 helical membrane-spanning segments follow: residues 348-368, 375-395, 442-462, 479-499, and 519-539; these read VVDY…LSLF, WGVA…PLSA, GGCL…WVLL, LSAP…MFLQ, and PLAF…YSLV.

Belongs to the OXA1/ALB3/YidC family. Type 1 subfamily. Interacts with the Sec translocase complex via SecD. Specifically interacts with transmembrane segments of nascent integral membrane proteins during membrane integration.

The protein localises to the cell inner membrane. Required for the insertion and/or proper folding and/or complex formation of integral membrane proteins into the membrane. Involved in integration of membrane proteins that insert both dependently and independently of the Sec translocase complex, as well as at least some lipoproteins. Aids folding of multispanning membrane proteins. This Nitrosospira multiformis (strain ATCC 25196 / NCIMB 11849 / C 71) protein is Membrane protein insertase YidC.